Reading from the N-terminus, the 203-residue chain is Small ribosomal subunit protein uS4 (203 aa).

Residues 93-156 (RRLDNVVYRL…IKVPAILEAV (64 aa)) enclose the S4 RNA-binding domain.

The protein belongs to the universal ribosomal protein uS4 family. In terms of assembly, part of the 30S ribosomal subunit. Contacts protein S5. The interaction surface between S4 and S5 is involved in control of translational fidelity.

Its function is as follows. One of the primary rRNA binding proteins, it binds directly to 16S rRNA where it nucleates assembly of the body of the 30S subunit. Functionally, with S5 and S12 plays an important role in translational accuracy. This is Small ribosomal subunit protein uS4 from Streptococcus suis (strain 98HAH33).